Consider the following 449-residue polypeptide: MREIISIHIGQAGAQVGNACWELYCLEHGINPDGQMPSDKSVGGGDDAFNTFFSETSSGKHVPRAIYLDLEPTVIDEIRTGTYRQLFHPEQLITGKEDAANNYARGHYTVGKEIVDLCLDRVRKLADQCSGLQGFLVFHSVGGGTGSGFGSLLLERLSVDYGKKSKLDFCVYPSPQVSTAVVEPYNSVLSTHGLLEHTDVAFMLDNEAIYDLCKKSLDIDRPSYANLNRLVAQVISSLTTSLRFDGALNVDINEFQTNLVPYPRIHFMLASYAPVISAEKAFHEQLSVAELTNTVFEPSSMMAKCDPRHGKYMACCLMYRGDVVPKDVTAAVAVIKTKRTIQFVDWCPTGFKCGINYQAPSVVPGGDLAKVQRALCMISNTTAIAEVFSRIDHKFDLMYAKRAFVHWYVGEGMEEGEFSEAREDLAALEKDYEEVGAETVGDDEAEEEM.

Q11 lines the GTP pocket. Residue K40 is modified to N6-acetyllysine. Residues E71, S140, G144, T145, T179, N206, and N228 each coordinate GTP. E71 contacts Mg(2+). The active site involves E254.

This sequence belongs to the tubulin family. As to quaternary structure, dimer of alpha and beta chains. A typical microtubule is a hollow water-filled tube with an outer diameter of 25 nm and an inner diameter of 15 nM. Alpha-beta heterodimers associate head-to-tail to form protofilaments running lengthwise along the microtubule wall with the beta-tubulin subunit facing the microtubule plus end conferring a structural polarity. Microtubules usually have 13 protofilaments but different protofilament numbers can be found in some organisms and specialized cells. The cofactor is Mg(2+). Acetylation of alpha chains at Lys-40 stabilizes microtubules and affects affinity and processivity of microtubule motors. This modification has a role in multiple cellular functions, ranging from cell motility, cell cycle progression or cell differentiation to intracellular trafficking and signaling.

The protein localises to the cytoplasm. It is found in the cytoskeleton. It localises to the spindle. Its subcellular location is the nucleus. The enzyme catalyses GTP + H2O = GDP + phosphate + H(+). Functionally, tubulin is the major constituent of microtubules, a cylinder consisting of laterally associated linear protofilaments composed of alpha- and beta-tubulin heterodimers. Microtubules grow by the addition of GTP-tubulin dimers to the microtubule end, where a stabilizing cap forms. Below the cap, tubulin dimers are in GDP-bound state, owing to GTPase activity of alpha-tubulin. The sequence is that of Tubulin alpha-1B chain (ALTBN) from Physarum polycephalum (Slime mold).